A 523-amino-acid polypeptide reads, in one-letter code: Calcium uptake protein 3, mitochondrial (523 aa).

Residues 1–6 (MAALRR) constitute a mitochondrion transit peptide. The EF-hand 1 domain occupies 226–261 (PHAGFRIAFNMFDTDGNEMVDKKEFLVLQEIFRKKN). The Ca(2+) site is built by aspartate 238, aspartate 240, asparagine 242, methionine 244, aspartate 246, and glutamate 249. An EF-hand 2; degenerate domain is found at 395-430 (ENTSVFLENVRYSISEEKGITFDEFRSFFQFLNNLE). An EF-hand 3 domain is found at 464 to 499 (SPHLVNTVFKIFDVDKDDQLSYKEFIGIMKDRLHRG). Ca(2+) is bound by residues aspartate 476, aspartate 478, aspartate 480, glutamine 482, and glutamate 487.

Belongs to the MICU1 family. MICU3 subfamily. As to quaternary structure, heterodimer; disulfide-linked; heterodimerizes with MICU1. Heterodimerizes with isoform 3 of MICU1 (MICU1.1) in skeletal muscle. Component of the uniplex complex, composed of MCU, EMRE/SMDT1, MICU1 and MICU3 in a 4:4:1:1 stoichiometry. As to expression, predominantly expressed in skeletal muscle and central nervous system.

It localises to the mitochondrion intermembrane space. The protein localises to the mitochondrion inner membrane. Tissue-specific calcium sensor of the mitochondrial calcium uniporter (MCU) channel, which specifically regulates MCU channel activity in the central nervous system and skeletal muscle. Senses calcium level via its EF-hand domains: compared to MICU1 and MICU2, MICU3 has a higher affinity for calcium. MICU1 and MICU3 form a disulfide-linked heterodimer that stimulates and inhibits MCU activity, depending on the concentration of calcium. At low calcium levels, MICU1 occludes the pore of the MCU channel, preventing mitochondrial calcium uptake. At higher calcium levels, calcium-binding to MICU1 and MICU3 induces a conformational change that weakens MCU-MICU1 interactions and moves the MICU1-MICU3 heterodimer away from the pore, allowing calcium permeation through the MCU channel. The high calcium affinity of MICU3 lowers the calcium threshold necessary for calcium permeation through the MCU channel. The MICU1-MICU3 heterodimer promotes flexibility of neurotransmission in neuronal cells by enhancing mitochondrial calcium uptake in presynapses. It is also required to increase mitochondrial calcium uptake in skeletal muscle cells, thereby increasing ATP production. The sequence is that of Calcium uptake protein 3, mitochondrial from Mus musculus (Mouse).